The primary structure comprises 417 residues: UDP-N-acetylglucosamine 1-carboxyvinyltransferase (417 aa).

Residue 22–23 coordinates phosphoenolpyruvate; that stretch reads KN. Arg92 contributes to the UDP-N-acetyl-alpha-D-glucosamine binding site. Cys116 acts as the Proton donor in catalysis. Cys116 carries the post-translational modification 2-(S-cysteinyl)pyruvic acid O-phosphothioketal. UDP-N-acetyl-alpha-D-glucosamine-binding positions include 121–125, Asp306, and Ile328; that span reads RPIDL.

It belongs to the EPSP synthase family. MurA subfamily.

It is found in the cytoplasm. The enzyme catalyses phosphoenolpyruvate + UDP-N-acetyl-alpha-D-glucosamine = UDP-N-acetyl-3-O-(1-carboxyvinyl)-alpha-D-glucosamine + phosphate. It participates in cell wall biogenesis; peptidoglycan biosynthesis. In terms of biological role, cell wall formation. Adds enolpyruvyl to UDP-N-acetylglucosamine. The polypeptide is UDP-N-acetylglucosamine 1-carboxyvinyltransferase (Buchnera aphidicola subsp. Schizaphis graminum (strain Sg)).